The chain runs to 502 residues: ATP synthase subunit alpha (502 aa).

Gly-169–Thr-176 contacts ATP.

It belongs to the ATPase alpha/beta chains family. As to quaternary structure, F-type ATPases have 2 components, CF(1) - the catalytic core - and CF(0) - the membrane proton channel. CF(1) has five subunits: alpha(3), beta(3), gamma(1), delta(1), epsilon(1). CF(0) has three main subunits: a(1), b(2) and c(9-12). The alpha and beta chains form an alternating ring which encloses part of the gamma chain. CF(1) is attached to CF(0) by a central stalk formed by the gamma and epsilon chains, while a peripheral stalk is formed by the delta and b chains.

It is found in the cell membrane. It carries out the reaction ATP + H2O + 4 H(+)(in) = ADP + phosphate + 5 H(+)(out). Its function is as follows. Produces ATP from ADP in the presence of a proton gradient across the membrane. The alpha chain is a regulatory subunit. This is ATP synthase subunit alpha from Streptococcus pyogenes serotype M18 (strain MGAS8232).